Consider the following 709-residue polypeptide: Copper amine oxidase vicK1 (709 aa).

Positions 1–20 are cleaved as a signal peptide; it reads MKLFLLFTLTLVNIFSVSLQ. Catalysis depends on Asp365, which acts as the Proton acceptor. An intrachain disulfide couples Cys383 to Cys408. Tyr448 (schiff-base intermediate with substrate; via topaquinone) is an active-site residue. Position 448 is a 2',4',5'-topaquinone (Tyr448). Positions 496 and 498 each coordinate Cu cation. Asp505, Leu506, Asp507, Glu548, Phe641, Glu645, Asp651, and Leu652 together coordinate Ca(2+). His662 contributes to the Cu cation binding site.

It belongs to the copper/topaquinone oxidase family. As to quaternary structure, homodimer; disulfide-linked. Cu cation is required as a cofactor. Ca(2+) serves as cofactor. The cofactor is L-topaquinone. In terms of processing, topaquinone (TPQ) is generated by copper-dependent autoxidation of a specific tyrosyl residue.

The protein operates within mycotoxin biosynthesis. In terms of biological role, copper amine oxidase, part of the gene cluster that mediates the biosynthesis of the secondary metabolite victorin, the molecular basis for Victoria blight of oats. Within the pathway, vicK1 catalyzes the oxidative deamination of the N-terminal glycyl moiety of the hexapeptides in order to produce the active glyoxylate form victorins. The pathway starts with the processing of the precursor vicA1 by several endopeptidases including kexin proteases as well as the cluster-specific S28 family peptidases vicPa and vicPb to produce 7 identical copies of the hexapeptide Gly-Leu-Lys-Leu-Ala-Phe. After being excised from the precursor peptide, the core peptides are cyclized and modified post-translationally by enzymes encoded within the gene cluster. The ustYa family oxidase vicYb is required for the formation of the macrocycle in victorin and the copper amine oxidases (CAOs) vicK1 and vicK2 are responsible for converting victorin to the active form by oxidizing the N-terminal glycyl residue in the peptides to glyoxylate. Relaxed substrate specificity of enzymes in the victorin biosynthetic pathway results in a metabolic grid that produces a set of analogs including victorinines B, C, E or HV-toxin M. This is Copper amine oxidase vicK1 from Bipolaris victoriae (strain FI3) (Victoria blight of oats agent).